Reading from the N-terminus, the 95-residue chain is Aspartyl/glutamyl-tRNA(Asn/Gln) amidotransferase subunit C (95 aa).

The protein belongs to the GatC family. Heterotrimer of A, B and C subunits.

It carries out the reaction L-glutamyl-tRNA(Gln) + L-glutamine + ATP + H2O = L-glutaminyl-tRNA(Gln) + L-glutamate + ADP + phosphate + H(+). The enzyme catalyses L-aspartyl-tRNA(Asn) + L-glutamine + ATP + H2O = L-asparaginyl-tRNA(Asn) + L-glutamate + ADP + phosphate + 2 H(+). Its function is as follows. Allows the formation of correctly charged Asn-tRNA(Asn) or Gln-tRNA(Gln) through the transamidation of misacylated Asp-tRNA(Asn) or Glu-tRNA(Gln) in organisms which lack either or both of asparaginyl-tRNA or glutaminyl-tRNA synthetases. The reaction takes place in the presence of glutamine and ATP through an activated phospho-Asp-tRNA(Asn) or phospho-Glu-tRNA(Gln). This is Aspartyl/glutamyl-tRNA(Asn/Gln) amidotransferase subunit C from Nitrobacter hamburgensis (strain DSM 10229 / NCIMB 13809 / X14).